Reading from the N-terminus, the 377-residue chain is Actin-related protein T2 (377 aa).

Belongs to the actin family.

Its subcellular location is the cytoplasm. The protein localises to the cytoskeleton. This chain is Actin-related protein T2 (Actrt2), found in Mus musculus (Mouse).